The sequence spans 484 residues: Acetyl-coenzyme A carboxylase carboxyl transferase subunit beta, chloroplastic (484 aa).

The region spanning 223-484 (LWIQCDNCYG…LHAFFPLNKN (262 aa)) is the CoA carboxyltransferase N-terminal domain. Positions 227, 230, 243, and 246 each coordinate Zn(2+). The segment at 227-246 (CDNCYGLMYKKVKINVCEQC) adopts a C4-type zinc-finger fold.

It belongs to the AccD/PCCB family. As to quaternary structure, acetyl-CoA carboxylase is a heterohexamer composed of biotin carboxyl carrier protein, biotin carboxylase and 2 subunits each of ACCase subunit alpha and ACCase plastid-coded subunit beta (accD). It depends on Zn(2+) as a cofactor.

Its subcellular location is the plastid. The protein resides in the chloroplast stroma. The enzyme catalyses N(6)-carboxybiotinyl-L-lysyl-[protein] + acetyl-CoA = N(6)-biotinyl-L-lysyl-[protein] + malonyl-CoA. The protein operates within lipid metabolism; malonyl-CoA biosynthesis; malonyl-CoA from acetyl-CoA: step 1/1. Its function is as follows. Component of the acetyl coenzyme A carboxylase (ACC) complex. Biotin carboxylase (BC) catalyzes the carboxylation of biotin on its carrier protein (BCCP) and then the CO(2) group is transferred by the transcarboxylase to acetyl-CoA to form malonyl-CoA. In Capsella bursa-pastoris (Shepherd's purse), this protein is Acetyl-coenzyme A carboxylase carboxyl transferase subunit beta, chloroplastic.